Here is a 1351-residue protein sequence, read N- to C-terminus: Bromodomain-containing protein 4A (1351 aa).

7 disordered regions span residues 1–23, 35–58, 168–244, 285–368, 478–638, 700–799, and 821–1334; these read MSSE…GIEG, PQPQ…QPKR, ETEL…RPPA, AAQP…DTKT, EPEE…PMSY, CLRK…LDSS, and PDLP…PSID. Residues 58 to 164 form the Bromo 1 domain; that stretch reads RQTNQLQYLL…KLFLQKISEM (107 aa). Residues 208-219 show a composition bias toward low complexity; it reads VKPPVTPVSKPS. Positions 220–235 are enriched in pro residues; it reads TPTPPTVTRAPTPPQT. Residues 327-343 are compositionally biased toward basic and acidic residues; that stretch reads PRKENGRQIRPTKKTEV. The span at 349 to 359 shows a compositional bias: pro residues; that stretch reads PAPPVLHPQPA. Residues 366-475 enclose the Bromo 2 domain; it reads TKTSEQLRYC…DVFEMRFAKM (110 aa). The segment covering 482 to 504 has biased composition (pro residues); the sequence is APAPVPSLAPGPPAPSIKGPPPT. The tract at residues 504–522 is NPS region; sequence TSSDSSSDSTSDSESSSDS. Residues 505–517 show a composition bias toward low complexity; the sequence is SSDSSSDSTSDSE. The BID region stretch occupies residues 543–598; that stretch reads QLAALSQPQPNKPKKKEREKRKEKHKRKEEVEEPRKGRIREPPAKKPKKSVQGSGG. The segment covering 554–569 has biased composition (basic residues); it reads KPKKKEREKRKEKHKR. Positions 570-586 are enriched in basic and acidic residues; that stretch reads KEEVEEPRKGRIREPPA. Over residues 607 to 621 the composition is skewed to pro residues; it reads PPPAPRPARPAPPSA. One can recognise an NET domain in the interval 624–708; the sequence is ESSEEETQRC…SCLRKKRKSQ (85 aa). Residues 629 to 638 are compositionally biased toward basic and acidic residues; that stretch reads ETQRCRPMSY. Residues 725-738 show a composition bias toward low complexity; that stretch reads SSSESESSSESSTS. Residues 751–767 are compositionally biased toward basic residues; it reads QKKKGHSGRESRKHHHP. Residues 788-799 are compositionally biased toward low complexity; the sequence is PSYPLPSSLDSS. Positions 872–890 are enriched in pro residues; sequence PAMPPSASPPPPAPQPPQQ. Basic residues predominate over residues 892-902; it reads HVHHHHHHHAQ. Polar residues predominate over residues 927 to 953; the sequence is LQKSQQPPTQSPIHSLLTSVKVQSQTP. Residues 968-983 show a composition bias toward pro residues; the sequence is VYPPPPSTATTAPPPA. 2 stretches are compositionally biased toward low complexity: residues 994 to 1003 and 1011 to 1028; these read PVVPQQLPAG and QQQQ…SHQQ. Positions 1051–1350 are C-terminal (CTD) region; it reads RQQKQETYPG…LMEIFEQNLF (300 aa). The segment covering 1075 to 1089 has biased composition (pro residues); the sequence is PPVPPYPGLTHPPSP. Composition is skewed to basic and acidic residues over residues 1150–1161 and 1176–1197; these read PRPDLKKMDGGR and PEKE…DIKI. Residues 1214 to 1224 show a composition bias toward polar residues; that stretch reads PTSAGKSTSDS. Residues 1226–1284 are compositionally biased toward basic and acidic residues; sequence ELFRRQAREKEERERALKLQAEQAERVRREQDRMSRTREDDEVQDQARKAHEEARRRQE. Low complexity predominate over residues 1301 to 1310; it reads SPAQSSQPMM. Residues 1311-1323 show a composition bias toward basic and acidic residues; that stretch reads DQREMARKREQER.

The protein belongs to the BET family.

The protein localises to the nucleus. It is found in the chromosome. Chromatin reader protein that recognizes and binds acetylated histones and plays a key role in transmission of epigenetic memory across cell divisions and transcription regulation. Remains associated with acetylated chromatin throughout the entire cell cycle and provides epigenetic memory for postmitotic G1 gene transcription by preserving acetylated chromatin status and maintaining high-order chromatin structure. During interphase, plays a key role in regulating the transcription of signal-inducible genes by associating with the P-TEFb complex and recruiting it to promoters. This Xenopus laevis (African clawed frog) protein is Bromodomain-containing protein 4A (brd4-a).